Consider the following 275-residue polypeptide: Light-independent protochlorophyllide reductase iron-sulfur ATP-binding protein (275 aa).

ATP-binding positions include 12 to 17 and K41; that span reads GIGKST. S16 contributes to the Mg(2+) binding site. C97 and C131 together coordinate [4Fe-4S] cluster. 182–183 contributes to the ATP binding site; it reads NR.

The protein belongs to the NifH/BchL/ChlL family. In terms of assembly, homodimer. Protochlorophyllide reductase is composed of three subunits; BchL, BchN and BchB. Requires [4Fe-4S] cluster as cofactor.

It carries out the reaction chlorophyllide a + oxidized 2[4Fe-4S]-[ferredoxin] + 2 ADP + 2 phosphate = protochlorophyllide a + reduced 2[4Fe-4S]-[ferredoxin] + 2 ATP + 2 H2O. The protein operates within porphyrin-containing compound metabolism; bacteriochlorophyll biosynthesis (light-independent). Component of the dark-operative protochlorophyllide reductase (DPOR) that uses Mg-ATP and reduced ferredoxin to reduce ring D of protochlorophyllide (Pchlide) to form chlorophyllide a (Chlide). This reaction is light-independent. The L component serves as a unique electron donor to the NB-component of the complex, and binds Mg-ATP. The protein is Light-independent protochlorophyllide reductase iron-sulfur ATP-binding protein of Chlorobium limicola (strain DSM 245 / NBRC 103803 / 6330).